The following is a 648-amino-acid chain: Pumilio homolog 3 (648 aa).

The disordered stretch occupies residues 1 to 124; it reads MEVKGKKQFT…KKKKELKQSR (124 aa). Basic and acidic residues predominate over residues 17–27; that stretch reads AQEKNRFHKNS. K33 carries the post-translational modification N6-acetyllysine. Residues 60-69 show a composition bias toward basic residues; sequence LGKKGVKQFK. Positions 94–124 are enriched in basic and acidic residues; it reads FQPDGRSDESAAKKPKWDDFKKKKKELKQSR. Residues 106-118 carry the Nuclear localization signal motif; sequence KKPKWDDFKKKKK. The 368-residue stretch at 143–510 folds into the PUM-HD domain; that stretch reads EILRRKDCDK…VVLDKSACVL (368 aa). Pumilio repeat units lie at residues 177–212, 213–248, 249–277, 289–325, 326–361, 362–397, 398–435, 436–504, 505–551, 552–596, and 597–636; these read HDST…LSKA, KYSR…MLRH, AEAS…ELYG, RTLD…VIKH, SLVH…LAHT, HDGA…VANG, QYSH…IVND, KYGR…VVLD, KSAC…IAEH, PAGH…WASV, and NRGA…KSTS. Residues 289 to 297 form an HA-8 region; sequence RTLDKVLEV.

Interacts with PARP1 (via catalytic domain). In terms of tissue distribution, widely expressed.

It is found in the nucleus. The protein localises to the nucleolus. The protein resides in the nucleoplasm. It localises to the chromosome. In terms of biological role, inhibits the poly(ADP-ribosyl)ation activity of PARP1 and the degradation of PARP1 by CASP3 following genotoxic stress. Binds to double-stranded RNA or DNA without sequence specificity. Involved in development of the eye and of primordial germ cells. The polypeptide is Pumilio homolog 3 (Homo sapiens (Human)).